The primary structure comprises 455 residues: Glycosyl hydrolase family 109 protein (455 aa).

The segment at residues 1 to 33 is a signal peptide (tat-type signal); that stretch reads MAGIDRRGFLKASMASVAAAALAGCASQQGTSA. Residues 62–63, D84, Q112, 133–136, 153–154, and N182 contribute to the NAD(+) site; these read ER, WALH, and EV. Substrate-binding positions include Y211, R230, 242 to 245, and Y324; that span reads YPTH. Y242 contributes to the NAD(+) binding site.

This sequence belongs to the Gfo/Idh/MocA family. Glycosyl hydrolase 109 subfamily. NAD(+) is required as a cofactor. In terms of processing, predicted to be exported by the Tat system. The position of the signal peptide cleavage has not been experimentally proven.

Functionally, glycosidase. In Shewanella amazonensis (strain ATCC BAA-1098 / SB2B), this protein is Glycosyl hydrolase family 109 protein.